The following is a 434-amino-acid chain: Probable glycine dehydrogenase (decarboxylating) subunit 1 (434 aa).

This sequence belongs to the GcvP family. N-terminal subunit subfamily. In terms of assembly, the glycine cleavage system is composed of four proteins: P, T, L and H. In this organism, the P 'protein' is a heterodimer of two subunits.

It catalyses the reaction N(6)-[(R)-lipoyl]-L-lysyl-[glycine-cleavage complex H protein] + glycine + H(+) = N(6)-[(R)-S(8)-aminomethyldihydrolipoyl]-L-lysyl-[glycine-cleavage complex H protein] + CO2. Functionally, the glycine cleavage system catalyzes the degradation of glycine. The P protein binds the alpha-amino group of glycine through its pyridoxal phosphate cofactor; CO(2) is released and the remaining methylamine moiety is then transferred to the lipoamide cofactor of the H protein. This chain is Probable glycine dehydrogenase (decarboxylating) subunit 1, found in Thermoplasma volcanium (strain ATCC 51530 / DSM 4299 / JCM 9571 / NBRC 15438 / GSS1).